We begin with the raw amino-acid sequence, 90 residues long: uncharacterized protein (90 aa).

This is an uncharacterized protein from Saccharomyces cerevisiae (strain ATCC 204508 / S288c) (Baker's yeast).